A 282-amino-acid polypeptide reads, in one-letter code: 2,3,4,5-tetrahydropyridine-2,6-dicarboxylate N-succinyltransferase (282 aa).

Positions 109 and 146 each coordinate substrate.

The protein belongs to the transferase hexapeptide repeat family. Homotrimer.

It is found in the cytoplasm. It catalyses the reaction (S)-2,3,4,5-tetrahydrodipicolinate + succinyl-CoA + H2O = (S)-2-succinylamino-6-oxoheptanedioate + CoA. The protein operates within amino-acid biosynthesis; L-lysine biosynthesis via DAP pathway; LL-2,6-diaminopimelate from (S)-tetrahydrodipicolinate (succinylase route): step 1/3. The polypeptide is 2,3,4,5-tetrahydropyridine-2,6-dicarboxylate N-succinyltransferase (Bartonella bacilliformis (strain ATCC 35685 / KC583 / Herrer 020/F12,63)).